The sequence spans 111 residues: Cryptic phage CTXphi transcriptional repressor RstR (111 aa).

Positions 6-60 (IRDLRVERDLNQEEVANGIGVGKNTYLAYEKGTQSPKLETVEKLAKFYGVPIAEL) constitute an HTH cro/C1-type domain. The H-T-H motif DNA-binding region spans 17 to 36 (QEEVANGIGVGKNTYLAYEK).

Transcriptional repressor of the integrated CTXPhi phage gene rstA2. The sequence is that of Cryptic phage CTXphi transcriptional repressor RstR (rstR) from Vibrio cholerae.